The sequence spans 384 residues: Secreted LysM effector Blys7 (384 aa).

An N-terminal signal peptide occupies residues 1–18; the sequence is MQRHLLLGLAGLPALLSA. Residues 27 to 71 enclose the LysM 1 domain; the sequence is FATVAANGETCDSMAATWGLDTATFQSLNPKAKCPEVIGGEQYCV. Residues 81–106 show a composition bias toward low complexity; sequence EPTTAPATTSTQTTTTTTTEVTSTTV. The segment at 81–112 is disordered; sequence EPTTAPATTSTQTTTTTTTEVTSTTVPGNGIT. The 47-residue stretch at 127–173 folds into the LysM 2 domain; it reads KFYFVNKGDNCADITARYNLDLSDFLEWNPKAGNSCSGLWANAYACV. The segment at 183–206 is disordered; that stretch reads KPKPTSTSTKPPTATGNGIPTPLP. Residues 186-195 are compositionally biased toward low complexity; the sequence is PTSTSTKPPT. In terms of domain architecture, LysM 3 spans 217–263; sequence KFYLVKPGETCADIASRNGVSLSDFLQWNPHAGNACSGLWANAYACL.

Belongs to the secreted LysM effector family.

Functionally, might have a role in sequestration of chitin oligosaccharides (breakdown products of fungal cell walls that are released during invasion and act as triggers of host immunity) to dampen host defense. The protein is Secreted LysM effector Blys7 of Beauveria bassiana (strain ARSEF 2860) (White muscardine disease fungus).